A 430-amino-acid polypeptide reads, in one-letter code: Glutamine synthetase, chloroplastic/mitochondrial (430 aa).

The transit peptide at 1–45 (MAQILAASPTCQMRVPKHSSVIASSSKLWSSVVLKQKKQSNNKVR) directs the protein to the chloroplast and mitochondrion. The region spanning 77–157 (IIAEYIWIGG…VICDTWTPAG (81 aa)) is the GS beta-grasp domain. The disordered stretch occupies residues 97–122 (TIEKPVEDPSELPKWNYDGSSTGQAP). Residue Ser106 is modified to Phosphoserine. One can recognise a GS catalytic domain in the interval 161–430 (PTNKRAKAAE…LAAQKLSLNV (270 aa)).

It belongs to the glutamine synthetase family. Homooctamer. As to expression, expressed in mesophyll and epidermal cells of leaves.

Its subcellular location is the plastid. It is found in the chloroplast. The protein localises to the mitochondrion. It carries out the reaction L-glutamate + NH4(+) + ATP = L-glutamine + ADP + phosphate + H(+). Its function is as follows. The light-modulated chloroplast/mitochondrial enzyme, encoded by a nuclear gene and expressed primarily in leaves, is responsible for the reassimilation of the ammonia generated by photorespiration. The chain is Glutamine synthetase, chloroplastic/mitochondrial (GLN2) from Arabidopsis thaliana (Mouse-ear cress).